Here is a 359-residue protein sequence, read N- to C-terminus: Phosphoserine aminotransferase (359 aa).

Residues serine 9 and arginine 42 each contribute to the L-glutamate site. Pyridoxal 5'-phosphate contacts are provided by residues 76-77 (AS), tryptophan 102, threonine 152, aspartate 171, and glutamine 194. Position 195 is an N6-(pyridoxal phosphate)lysine (lysine 195). Position 236–237 (236–237 (NT)) interacts with pyridoxal 5'-phosphate.

The protein belongs to the class-V pyridoxal-phosphate-dependent aminotransferase family. SerC subfamily. Homodimer. The cofactor is pyridoxal 5'-phosphate.

It localises to the cytoplasm. The enzyme catalyses O-phospho-L-serine + 2-oxoglutarate = 3-phosphooxypyruvate + L-glutamate. The catalysed reaction is 4-(phosphooxy)-L-threonine + 2-oxoglutarate = (R)-3-hydroxy-2-oxo-4-phosphooxybutanoate + L-glutamate. The protein operates within amino-acid biosynthesis; L-serine biosynthesis; L-serine from 3-phospho-D-glycerate: step 2/3. Its pathway is cofactor biosynthesis; pyridoxine 5'-phosphate biosynthesis; pyridoxine 5'-phosphate from D-erythrose 4-phosphate: step 3/5. Catalyzes the reversible conversion of 3-phosphohydroxypyruvate to phosphoserine and of 3-hydroxy-2-oxo-4-phosphonooxybutanoate to phosphohydroxythreonine. This is Phosphoserine aminotransferase from Marinomonas sp. (strain MWYL1).